The primary structure comprises 321 residues: uncharacterized protein (321 aa).

A signal peptide spans 1 to 18 (MKKMKKLLLLLSASFAFS).

This is an uncharacterized protein from Aquifex aeolicus (strain VF5).